The primary structure comprises 90 residues: Probable Fe(2+)-trafficking protein (90 aa).

The protein belongs to the Fe(2+)-trafficking protein family.

Its function is as follows. Could be a mediator in iron transactions between iron acquisition and iron-requiring processes, such as synthesis and/or repair of Fe-S clusters in biosynthetic enzymes. In Pseudomonas putida (strain ATCC 700007 / DSM 6899 / JCM 31910 / BCRC 17059 / LMG 24140 / F1), this protein is Probable Fe(2+)-trafficking protein.